We begin with the raw amino-acid sequence, 123 residues long: D-ribose pyranase (123 aa).

The Proton donor role is filled by H20. Substrate-binding positions include D28, H90, and 112–114; that span reads YAN.

It belongs to the RbsD / FucU family. RbsD subfamily. Homodecamer.

The protein resides in the cytoplasm. The catalysed reaction is beta-D-ribopyranose = beta-D-ribofuranose. It functions in the pathway carbohydrate metabolism; D-ribose degradation; D-ribose 5-phosphate from beta-D-ribopyranose: step 1/2. In terms of biological role, catalyzes the interconversion of beta-pyran and beta-furan forms of D-ribose. This Corynebacterium glutamicum (strain R) protein is D-ribose pyranase.